The sequence spans 324 residues: Annexin A3 (324 aa).

4 Annexin repeats span residues 19–90 (FNPS…ALIT), 91–162 (APAV…TLAD), 174–246 (HLAK…AVVR), and 250–321 (NTPA…KICG). Lysine 178 bears the N6-acetyllysine mark. At threonine 268 the chain carries Phosphothreonine.

Belongs to the annexin family.

Inhibitor of phospholipase A2, also possesses anti-coagulant properties. The chain is Annexin A3 (Anxa3) from Rattus norvegicus (Rat).